We begin with the raw amino-acid sequence, 332 residues long: Glycerol-3-phosphate dehydrogenase [NAD(P)+] (332 aa).

NADPH is bound by residues S15, W16, and K110. Sn-glycerol 3-phosphate is bound by residues K110, G137, and S139. A141 provides a ligand contact to NADPH. Sn-glycerol 3-phosphate-binding residues include K192, D245, S255, R256, and N257. The active-site Proton acceptor is the K192. Residue R256 participates in NADPH binding. An NADPH-binding site is contributed by E282.

This sequence belongs to the NAD-dependent glycerol-3-phosphate dehydrogenase family.

The protein resides in the cytoplasm. The enzyme catalyses sn-glycerol 3-phosphate + NAD(+) = dihydroxyacetone phosphate + NADH + H(+). The catalysed reaction is sn-glycerol 3-phosphate + NADP(+) = dihydroxyacetone phosphate + NADPH + H(+). It participates in membrane lipid metabolism; glycerophospholipid metabolism. Its function is as follows. Catalyzes the reduction of the glycolytic intermediate dihydroxyacetone phosphate (DHAP) to sn-glycerol 3-phosphate (G3P), the key precursor for phospholipid synthesis. This chain is Glycerol-3-phosphate dehydrogenase [NAD(P)+], found in Coxiella burnetii (strain CbuK_Q154) (Coxiella burnetii (strain Q154)).